The primary structure comprises 101 residues: Small ribosomal subunit protein uS14 (101 aa).

Residues 1-23 (MAKKSSVEKNKRRRKMVAQQAPK) are disordered.

Belongs to the universal ribosomal protein uS14 family. In terms of assembly, part of the 30S ribosomal subunit. Contacts proteins S3 and S10.

Functionally, binds 16S rRNA, required for the assembly of 30S particles and may also be responsible for determining the conformation of the 16S rRNA at the A site. The protein is Small ribosomal subunit protein uS14 of Rhodospirillum centenum (strain ATCC 51521 / SW).